Consider the following 371-residue polypeptide: Gustatory receptor-like 65a (371 aa).

Over 1-13 the chain is Cytoplasmic; the sequence is MREVNLLNRFTRQ. Residues 14 to 34 form a helical membrane-spanning segment; the sequence is FLFLIVLVTQICGVATFVYNS. At 35–42 the chain is on the extracellular side; sequence KAQCFRQS. The helical transmembrane segment at 43–63 threads the bilayer; that stretch reads GFLRFYSSLVLIFLALFLIVT. Over 64 to 72 the chain is Cytoplasmic; sequence TSKMFHNLQ. A helical transmembrane segment spans residues 73-93; that stretch reads AVWPYVVGSVIILVVRIHGLL. Residues 94–126 are Extracellular-facing; sequence ESAEIVELLNQMLRIMRQVNLMARHPNLFRLKH. A helical transmembrane segment spans residues 127-147; sequence LLLLLLALQNLLRSLNTIVGI. The Cytoplasmic segment spans residues 148–161; that stretch reads SNHSAEAYDSFLNS. The chain crosses the membrane as a helical span at residues 162-182; the sequence is VILLIILAVLLSFLLQITINI. Over 183–251 the chain is Extracellular; it reads CLFVVLIATY…FHITVRIIRH (69 aa). A helical transmembrane segment spans residues 252-272; sequence FRFHWLCAIIYGLLPFFSLTA. At 273-277 the chain is on the cytoplasmic side; sequence KDQNG. Residues 278-298 traverse the membrane as a helical segment; the sequence is FNFLIISALNIIFQWTIFAIL. At 299–371 the chain is on the extracellular side; sequence SRESRITRSL…FVNRLEYLHI (73 aa).

It localises to the cell membrane. This chain is Gustatory receptor-like 65a, found in Drosophila melanogaster (Fruit fly).